The chain runs to 376 residues: 1-acyl-sn-glycerol-3-phosphate acyltransferase gamma (376 aa).

Over Met1–Lys124 the chain is Cytoplasmic. Positions His96–Asp101 match the HXXXXD motif motif. The chain crosses the membrane as a helical span at residues Glu125–Lys145. The Lumenal portion of the chain corresponds to Arg146–Thr316. The chain crosses the membrane as a helical span at residues Ile317 to Leu339. Topologically, residues Thr340–Glu376 are cytoplasmic.

This sequence belongs to the 1-acyl-sn-glycerol-3-phosphate acyltransferase family.

It is found in the endoplasmic reticulum membrane. Its subcellular location is the nucleus envelope. It carries out the reaction a 1-acyl-sn-glycero-3-phosphate + an acyl-CoA = a 1,2-diacyl-sn-glycero-3-phosphate + CoA. The catalysed reaction is pentadecanoyl-CoA + 1-(9Z-octadecenoyl)-sn-glycero-3-phosphate = 1-(9Z)-octadecenoyl-2-pentadecanoyl-sn-glycero-3-phosphate + CoA. The enzyme catalyses heptadecanoyl-CoA + 1-(9Z-octadecenoyl)-sn-glycero-3-phosphate = 1-(9Z)-octadecenoyl-2-heptadecanoyl-sn-glycero-3-phosphate + CoA. It catalyses the reaction 1-(9Z-octadecenoyl)-sn-glycero-3-phosphate + octadecanoyl-CoA = 1-(9Z-octadecenoyl)-2-octadecanoyl-sn-glycero-3-phosphate + CoA. It carries out the reaction nonadecanoyl-CoA + 1-(9Z-octadecenoyl)-sn-glycero-3-phosphate = 1-(9Z)-octadecenoyl-2-nonadecanoyl-sn-glycero-3-phosphate + CoA. The catalysed reaction is 1-(9Z-octadecenoyl)-sn-glycero-3-phosphate + (5Z,8Z,11Z,14Z)-eicosatetraenoyl-CoA = 1-(9Z)-octadecenoyl-2-(5Z,8Z,11Z,14Z)-eicosatetraenoyl-sn-glycero-3-phosphate + CoA. The enzyme catalyses 1-(9Z-octadecenoyl)-sn-glycero-3-phosphate + (9Z)-octadecenoyl-CoA = 1,2-di-(9Z-octadecenoyl)-sn-glycero-3-phosphate + CoA. It catalyses the reaction 1-(9Z-octadecenoyl)-sn-glycero-3-phosphate + (9Z,12Z)-octadecadienoyl-CoA = 1-(9Z)-octadecenoyl-2-(9Z,12Z)-octadecadienoyl-sn-glycero-3-phosphate + CoA. It carries out the reaction 1-(9Z-octadecenoyl)-sn-glycero-3-phosphocholine + (5Z,8Z,11Z,14Z)-eicosatetraenoyl-CoA = 1-(9Z)-octadecenoyl-2-(5Z,8Z,11Z,14Z)-icosatetraenoyl-sn-glycero-3-phosphocholine + CoA. The catalysed reaction is 1-(9Z-octadecenoyl)-sn-glycero-3-phospho-(1D-myo-inositol) + (5Z,8Z,11Z,14Z)-eicosatetraenoyl-CoA = 1-(9Z-octadecenoyl)-2-(5Z,8Z,11Z,14Z-eicosatetraenoyl)-sn-glycero-3-phospho-1D-myo-inositol + CoA. The enzyme catalyses 1-(9Z-octadecenoyl)-sn-glycero-3-phospho-L-serine + (5Z,8Z,11Z,14Z)-eicosatetraenoyl-CoA = 1-(9Z-octadecenoyl)-2-(5Z,8Z,11Z,14Z-eicosatetraenoyl)-sn-glycero-3-phospho-L-serine + CoA. It catalyses the reaction 1-hexadecanoyl-sn-glycero-3-phosphate + (9Z)-octadecenoyl-CoA = 1-hexadecanoyl-2-(9Z-octadecenoyl)-sn-glycero-3-phosphate + CoA. It carries out the reaction 1-hexadecanoyl-sn-glycero-3-phosphate + (5Z,8Z,11Z,14Z)-eicosatetraenoyl-CoA = 1-hexadecanoyl-2-(5Z,8Z,11Z,14Z-eicosatetraenoyl)-sn-glycero-3-phosphate + CoA. The catalysed reaction is 1-heptadecanoyl-sn-glycero-3-phosphate + (5Z,8Z,11Z,14Z)-eicosatetraenoyl-CoA = 1-heptadecanoyl-2-(5Z,8Z,11Z,14Z)-eicosatetraenoyl-sn-glycero-3-phosphate + CoA. The enzyme catalyses 1-octadecanoyl-sn-glycero-3-phosphate + (9Z)-octadecenoyl-CoA = 1-octadecanoyl-2-(9Z-octadecenoyl)-sn-glycero-3-phosphate + CoA. It catalyses the reaction 1-octadecanoyl-sn-glycero-3-phosphate + (5Z,8Z,11Z,14Z)-eicosatetraenoyl-CoA = 1-octadecanoyl-2-(5Z,8Z,11Z,14Z-eicosatetraenoyl)-sn-glycero-3-phosphate + CoA. It carries out the reaction 1-(9Z-octadecenoyl)-sn-glycero-3-phosphate + hexadecanoyl-CoA = 1-hexadecanoyl-2-(9Z-octadecenoyl)-sn-glycero-3-phosphate + CoA. The catalysed reaction is 1-O-(9Z-octadecenyl)-sn-glycero-3-phosphate + (5Z,8Z,11Z,14Z)-eicosatetraenoyl-CoA = 1-O-(9Z-octadecenyl)-2-(5Z,8Z,11Z,14Z-eicosatetraenoyl)-sn-glycero-3-phosphate + CoA. The enzyme catalyses a 1-acyl-sn-glycero-3-phospho-(1D-myo-inositol) + (5Z,8Z,11Z,14Z)-eicosatetraenoyl-CoA = a 1-acyl-2-(5Z,8Z,11Z,14Z-eicosatetraenoyl)-sn-glycero-3-phospho-(1D-myo-inositol) + CoA. It participates in phospholipid metabolism; CDP-diacylglycerol biosynthesis; CDP-diacylglycerol from sn-glycerol 3-phosphate: step 2/3. In terms of biological role, converts 1-acyl-sn-glycerol-3-phosphate (lysophosphatidic acid or LPA) into 1,2-diacyl-sn-glycerol-3-phosphate (phosphatidic acid or PA) by incorporating an acyl moiety at the sn-2 position of the glycerol backbone. Acts on LPA containing saturated or unsaturated fatty acids C16:0-C20:4 at the sn-1 position using C18:1, C20:4 or C18:2-CoA as the acyl donor. Also acts on lysophosphatidylcholine, lysophosphatidylinositol and lysophosphatidylserine using C18:1 or C20:4-CoA. Has a preference for arachidonoyl-CoA as a donor. Also has a modest lysophosphatidylinositol acyltransferase (LPIAT) activity, converts lysophosphatidylinositol (LPI) into phosphatidylinositol. The protein is 1-acyl-sn-glycerol-3-phosphate acyltransferase gamma (AGPAT3) of Pongo abelii (Sumatran orangutan).